The chain runs to 664 residues: Cyclic nucleotide-gated channel alpha-2 (664 aa).

The span at 1-20 (MTEKSNGVKSSPANNHNNHV) shows a compositional bias: polar residues. Residues 1–49 (MTEKSNGVKSSPANNHNNHVPATIKANGKDESRTRSRPQSAADDDTSSE) are disordered. The Cytoplasmic portion of the chain corresponds to 1 to 144 (MTEKSNGVKS…PAGDWYYRWL (144 aa)). Residues 145-166 (FVIAMPVLYNWCLLVARACFSD) form a helical membrane-spanning segment. At 167-176 (LQRGYFLVWL) the chain is on the extracellular side. A helical membrane pass occupies residues 177 to 197 (VLDYFSDVVYIADLFIRLRTG). The Cytoplasmic portion of the chain corresponds to 198 to 222 (FLEQGLLVKDPKKLRDNYIHTLQFK). The chain crosses the membrane as a helical span at residues 223 to 241 (LDVASIIPTDLIYFAVGIH). Topologically, residues 242–246 (NPELR) are extracellular. The helical transmembrane segment at 247 to 265 (FNRLLHFARMFEFFDRTET) threads the bilayer. Residues 266–272 (RTSYPNI) lie on the Cytoplasmic side of the membrane. The segment at 270–378 (PNIFRISNLV…GNVGSMISNM (109 aa)) is ion conduction pathway. A helical membrane pass occupies residues 273–296 (FRISNLVLYILVIIHWNACIYYAI). Residues 297–319 (SKSIGFGVDTWVYPNITDPEYGY) lie on the Extracellular side of the membrane. 2 consecutive transmembrane segments (helical) span residues 320–354 (LARE…LFVI) and 355–379 (FDFL…SNMN). Residues 337-340 (TIGE) are selectivity filter. The interval 380–456 (ATRAEFQAKI…STLKKVRIFQ (77 aa)) is C-linker. The Cytoplasmic segment spans residues 380–664 (ATRAEFQAKI…SPEPAAAEQP (285 aa)). A cyclic nucleotide-binding domain region spans residues 460–580 (AGLLVELVLK…EERGREILMK (121 aa)). 3',5'-cyclic GMP contacts are provided by Gly520, Ser523, Arg536, and Thr537. 3',5'-cyclic AMP contacts are provided by Arg536 and Thr537. Residues 597–651 (VQEKLKQLETNMETLYTRFGRLLAEYTGAQQKLKQRITVLEVKMKQNTEDDYLSD) are a coiled coil. The interval 644–664 (TEDDYLSDGMNSPEPAAAEQP) is disordered.

The protein belongs to the cyclic nucleotide-gated cation channel (TC 1.A.1.5) family. CNGA2 subfamily. As to quaternary structure, the olfactory cyclic nucleotide-gated channel is an heterotetramer composed of CNGA2, CNGA4 and CNGB1b subunits with 2:1:1 stoichiometry.

It localises to the cell projection. Its subcellular location is the cilium membrane. It carries out the reaction Ca(2+)(in) = Ca(2+)(out). The enzyme catalyses Na(+)(in) = Na(+)(out). The catalysed reaction is K(+)(in) = K(+)(out). It catalyses the reaction NH4(+)(in) = NH4(+)(out). It carries out the reaction Rb(+)(in) = Rb(+)(out). The enzyme catalyses Li(+)(in) = Li(+)(out). The catalysed reaction is Cs(+)(in) = Cs(+)(out). Its function is as follows. Pore-forming subunit of the olfactory cyclic nucleotide-gated channel. Operates in the cilia of olfactory sensory neurons where chemical stimulation of the odorant is converted to an electrical signal. Mediates odorant-induced cAMP-dependent Ca(2+) influx triggering neuron depolarization. The rise of intracellular Ca(2+) levels potentiates the olfactory response by activating Ca(2+)-dependent Cl(-) channels, but it also serves as a negative feedback signal to desensitize the channel for rapid adaptation to odorants. Conducts cAMP- and cGMP-gated ion currents, with permeability for monovalent and divalent cations. This Oryctolagus cuniculus (Rabbit) protein is Cyclic nucleotide-gated channel alpha-2.